Here is a 650-residue protein sequence, read N- to C-terminus: Acetyl-coenzyme A synthetase (650 aa).

CoA-binding positions include 191–194, Thr311, and Asn335; that span reads RGGR. Residues 387 to 389, 411 to 416, Asp501, and Arg516 contribute to the ATP site; these read GEP and DTWWQT. A CoA-binding site is contributed by Ser524. Arg527 provides a ligand contact to ATP. Residues Val538, His540, and Ile543 each contribute to the Mg(2+) site. Position 585 (Arg585) interacts with CoA. Lys610 carries the N6-acetyllysine modification.

Belongs to the ATP-dependent AMP-binding enzyme family. It depends on Mg(2+) as a cofactor. In terms of processing, acetylated. Deacetylation by the SIR2-homolog deacetylase activates the enzyme.

It carries out the reaction acetate + ATP + CoA = acetyl-CoA + AMP + diphosphate. Functionally, catalyzes the conversion of acetate into acetyl-CoA (AcCoA), an essential intermediate at the junction of anabolic and catabolic pathways. AcsA undergoes a two-step reaction. In the first half reaction, AcsA combines acetate with ATP to form acetyl-adenylate (AcAMP) intermediate. In the second half reaction, it can then transfer the acetyl group from AcAMP to the sulfhydryl group of CoA, forming the product AcCoA. This Vibrio parahaemolyticus serotype O3:K6 (strain RIMD 2210633) protein is Acetyl-coenzyme A synthetase.